The chain runs to 85 residues: Beta-insect depressant toxin BjIT2 (85 aa).

A signal peptide spans 1–21; sequence MKLLLLLVISASMLLECLVNA. One can recognise an LCN-type CS-alpha/beta domain in the interval 22 to 82; it reads DGYIRKKDGC…TWKSSTNTCG (61 aa). Intrachain disulfides connect C31/C81, C35/C56, C42/C63, and C46/C65. Positions 83-85 are cleaved as a propeptide — removed by a carboxypeptidase; sequence RKK.

This sequence belongs to the long (4 C-C) scorpion toxin superfamily. Sodium channel inhibitor family. Beta subfamily. C-terminal basic residues are removed by a carboxypeptidase. Expressed by the venom gland.

It is found in the secreted. In terms of biological role, depressant insect beta-toxins cause a transient contraction paralysis followed by a slow flaccid paralysis. They bind voltage-independently at site-4 of sodium channels (Nav) and shift the voltage of activation toward more negative potentials thereby affecting sodium channel activation and promoting spontaneous and repetitive firing. This toxin is active only on insects. In Hottentotta judaicus (Black scorpion), this protein is Beta-insect depressant toxin BjIT2.